Here is a 476-residue protein sequence, read N- to C-terminus: Cysteine--tRNA ligase (476 aa).

Cysteine 29 contributes to the Zn(2+) binding site. The 'HIGH' region signature appears at 31 to 41 (PTVYDYPHLGH). Zn(2+) is bound by residues cysteine 209, histidine 234, and glutamate 238. The 'KMSKS' region motif lies at 266–270 (KMSKS). Lysine 269 contributes to the ATP binding site.

It belongs to the class-I aminoacyl-tRNA synthetase family. Zn(2+) is required as a cofactor.

The protein resides in the cytoplasm. The catalysed reaction is tRNA(Cys) + L-cysteine + ATP = L-cysteinyl-tRNA(Cys) + AMP + diphosphate. This chain is Cysteine--tRNA ligase, found in Thermococcus gammatolerans (strain DSM 15229 / JCM 11827 / EJ3).